A 182-amino-acid chain; its full sequence is Transcription termination/antitermination protein NusG (182 aa).

The 31-residue stretch at 131 to 161 (GEVVRVNDGPFADFNGTVEEVDYEKSRLKVS) folds into the KOW domain.

This sequence belongs to the NusG family.

Functionally, participates in transcription elongation, termination and antitermination. The protein is Transcription termination/antitermination protein NusG of Vibrio cholerae serotype O1 (strain ATCC 39315 / El Tor Inaba N16961).